Here is a 299-residue protein sequence, read N- to C-terminus: MLRLFYFSAIIASVILNFVGIIMNLFITVVNCKTWVKSHRISSSDRILFSLGITRFLMLGLFLVNTIYFVSSNTERSVYLSAFFVLCFMFLDSSSLWFVTLLNILYCVKITNFQHSVFLLLKRNISPKIPRLLLACVLISAFTTCLYITLSQASPFPELVTTRNNTSFNINEGILSLVVSLVLSSSLQFIINVTSASLLIHSLRRHIQKMQKNATGFWNPQTEAHVGAMKLMVYFLILYIPYSVATLVQYLPFYAGMDMGTKSICLIFATLYSPGHSVLIIITHPKLKTTAKKILCFKK.

Over 1–9 (MLRLFYFSA) the chain is Extracellular. A helical transmembrane segment spans residues 10 to 30 (IIASVILNFVGIIMNLFITVV). At 31–46 (NCKTWVKSHRISSSDR) the chain is on the cytoplasmic side. The chain crosses the membrane as a helical span at residues 47 to 67 (ILFSLGITRFLMLGLFLVNTI). The Extracellular segment spans residues 68–81 (YFVSSNTERSVYLS). A helical transmembrane segment spans residues 82 to 102 (AFFVLCFMFLDSSSLWFVTLL). Topologically, residues 103-131 (NILYCVKITNFQHSVFLLLKRNISPKIPR) are cytoplasmic. A helical transmembrane segment spans residues 132-152 (LLLACVLISAFTTCLYITLSQ). The Extracellular segment spans residues 153–172 (ASPFPELVTTRNNTSFNINE). N-linked (GlcNAc...) asparagine glycosylation is found at N164 and N165. Residues 173-193 (GILSLVVSLVLSSSLQFIINV) traverse the membrane as a helical segment. Over 194–230 (TSASLLIHSLRRHIQKMQKNATGFWNPQTEAHVGAMK) the chain is Cytoplasmic. Residues 231–251 (LMVYFLILYIPYSVATLVQYL) form a helical membrane-spanning segment. At 252-262 (PFYAGMDMGTK) the chain is on the extracellular side. The helical transmembrane segment at 263-283 (SICLIFATLYSPGHSVLIIIT) threads the bilayer. At 284–299 (HPKLKTTAKKILCFKK) the chain is on the cytoplasmic side.

Belongs to the G-protein coupled receptor T2R family.

It is found in the membrane. It localises to the cell projection. The protein localises to the cilium membrane. Functionally, gustducin-coupled receptor implicated in the perception of bitter compounds in the oral cavity and the gastrointestinal tract. Signals through PLCB2 and the calcium-regulated cation channel TRPM5. In airway epithelial cells, binding of denatonium increases the intracellular calcium ion concentration and stimulates ciliary beat frequency. This Pan paniscus (Pygmy chimpanzee) protein is Taste receptor type 2 member 4 (TAS2R4).